We begin with the raw amino-acid sequence, 384 residues long: Bifunctional enzyme IspD/IspF (384 aa).

2-C-methyl-D-erythritol 4-phosphate cytidylyltransferase stretches follow at residues 1–227 and 1–228; these read MAKV…EGEQ and MAKV…GEQR. Positions 228-384 are 2-C-methyl-D-erythritol 2,4-cyclodiphosphate synthase; it reads RIGSGFDVHR…QATALITLPF (157 aa). D234 and H236 together coordinate a divalent metal cation. 4-CDP-2-C-methyl-D-erythritol 2-phosphate contacts are provided by residues 234–236 and 260–261; these read DVH and HS. A divalent metal cation is bound at residue H268. 4-CDP-2-C-methyl-D-erythritol 2-phosphate is bound by residues 282-284, 358-361, F365, and R368; these read DIG and TTTE.

This sequence in the N-terminal section; belongs to the IspD/TarI cytidylyltransferase family. IspD subfamily. It in the C-terminal section; belongs to the IspF family. A divalent metal cation serves as cofactor.

The enzyme catalyses 2-C-methyl-D-erythritol 4-phosphate + CTP + H(+) = 4-CDP-2-C-methyl-D-erythritol + diphosphate. It catalyses the reaction 4-CDP-2-C-methyl-D-erythritol 2-phosphate = 2-C-methyl-D-erythritol 2,4-cyclic diphosphate + CMP. It functions in the pathway isoprenoid biosynthesis; isopentenyl diphosphate biosynthesis via DXP pathway; isopentenyl diphosphate from 1-deoxy-D-xylulose 5-phosphate: step 2/6. The protein operates within isoprenoid biosynthesis; isopentenyl diphosphate biosynthesis via DXP pathway; isopentenyl diphosphate from 1-deoxy-D-xylulose 5-phosphate: step 4/6. Its function is as follows. Bifunctional enzyme that catalyzes the formation of 4-diphosphocytidyl-2-C-methyl-D-erythritol from CTP and 2-C-methyl-D-erythritol 4-phosphate (MEP) (IspD), and catalyzes the conversion of 4-diphosphocytidyl-2-C-methyl-D-erythritol 2-phosphate (CDP-ME2P) to 2-C-methyl-D-erythritol 2,4-cyclodiphosphate (ME-CPP) with a corresponding release of cytidine 5-monophosphate (CMP) (IspF). The protein is Bifunctional enzyme IspD/IspF of Rhodospirillum rubrum (strain ATCC 11170 / ATH 1.1.1 / DSM 467 / LMG 4362 / NCIMB 8255 / S1).